Here is a 476-residue protein sequence, read N- to C-terminus: Adenylyl cyclase-associated protein 2 (476 aa).

Residues 223–322 form a disordered region; the sequence is SILSSGPGLP…KSNSPQKHTP (100 aa). Pro residues predominate over residues 230 to 247; it reads GLPPPPPPPPPPGPPPPF. Over residues 288-299 the composition is skewed to polar residues; the sequence is KNPSLRAQGQIR. 2 positions are modified to phosphoserine: Ser-300 and Ser-308. A compositionally biased stretch (low complexity) spans 300-317; the sequence is SPTKTHTPSPTSPKSNSP. In terms of domain architecture, C-CAP/cofactor C-like spans 317–454; it reads PQKHTPVLEL…QDDDYREFPI (138 aa).

Belongs to the CAP family. Expressed in the heart, skeletal muscle, and brain.

Its subcellular location is the cell membrane. Involved in the regulation of actin polymerization. In Mus musculus (Mouse), this protein is Adenylyl cyclase-associated protein 2 (Cap2).